A 320-amino-acid polypeptide reads, in one-letter code: MENKNTFSWVKEQMTRSISVSIMIYVITQTSISNAYPIFAQQGYENPREATGRIVCANCHLASKPVDIEVPQAVLPDTVFEAVLRIPYDMQLKQVLANGKKGGLNVGAVLILPEGFELAPPDRISPELKEKIGNLSFQSYRPDKKNILVIGPVPGKKYSEIVFPILSPDPATKKDAYFLKYPIYVGGNRGRGQIYPDGSKSNNTVYNATSTGIVKKILRKEKGGYEISIVDASDGRQVIDTIPPGPELLVSEGESIKLDQPLTSNPNVGGFGQGDAEIVLQDPLRVQGLLFFFASVILAQVFLVLKKKQFEKVQLYEMNF.

Positions 1–35 (MENKNTFSWVKEQMTRSISVSIMIYVITQTSISNA) are cleaved as a signal peptide. Heme contacts are provided by Y36, C56, C59, and H60. The helical transmembrane segment at 286 to 306 (VQGLLFFFASVILAQVFLVLK) threads the bilayer.

The protein belongs to the cytochrome f family. In terms of assembly, the 4 large subunits of the cytochrome b6-f complex are cytochrome b6, subunit IV (17 kDa polypeptide, petD), cytochrome f and the Rieske protein, while the 4 small subunits are PetG, PetL, PetM and PetN. The complex functions as a dimer. The cofactor is heme.

The protein resides in the plastid. The protein localises to the chloroplast thylakoid membrane. Component of the cytochrome b6-f complex, which mediates electron transfer between photosystem II (PSII) and photosystem I (PSI), cyclic electron flow around PSI, and state transitions. This is Cytochrome f from Lolium perenne (Perennial ryegrass).